The following is a 732-amino-acid chain: MVDEMVLITQQWLNDTYSGKHGYNPVEESGKTGWDTIYGLTRALQIELGISEPADNFGPTTQRLFKPLKRQAPDSKPSNMNFILQGALWCKGFNPGGFTGVFYEKTENAVKEFQKAAGLTTQDGIVTTLIMKALLDMSAFKLVSGGDSRIRQIQQNLNRDYNDYIGLMPCDGLYGRDTNKALIYALQKEEGMSTSVANGFFGNGTTSLCPTLTPGDSRTGFVLIVQYALYCNGKSFDPGEFDGKYGVGVVSAVKAFQEFMCLPQTGYADMPTIKALLSSSGDTTRTASACDTATIITAEKAQTLRNNGYKTVGRYLTGNVRTSSGLTSKALTSKELAVILDAGLKVFPIYQDGGYESSYFVKDQGTRDAYSAASAARRLGFPSGTTIYFAVDFDAYDYEVTDKIIPYFQEIKSAFTKMQTFSTAPKYEIGVYGPRNICIRTSEAGLTKYSFVANMSTGFSGNLGYPMPNNWAFDQFYEGTIGSGSGSIGIDKDGYSGRDSGASNVNPPSDPVYDARLRTLTDILSTIPALENLTSLANAMFEFDTTETIFTSPELDIILSTSLLATIPSEGSPNTITITNGKPGAYITGLLGDTQTSLTASQIDSYQNLLNSLSLSVRNGYLEVYVNPTAESLNIQIKIYTPDIPVGDNVTTGLTTTITFKIKTYKGVPVTSPESELALDWPSYDQYLFPVVGVAALLLIGNMGSDLTNNKGVKVATALSAMLLAIFAYYTS.

2 consecutive transmembrane segments (helical) span residues Tyr687–Leu707 and Gly712–Ser732.

This sequence belongs to the FadG family.

Its subcellular location is the cell membrane. This is an uncharacterized protein from Bacillus subtilis (strain 168).